A 187-amino-acid chain; its full sequence is CASP-like protein 2C1 (187 aa).

Topologically, residues 1 to 14 (MVAAARVVSGVKAE) are cytoplasmic. Residues 15–35 (GLLRGACAALAAAAALLLGLS) form a helical membrane-spanning segment. Residues 36 to 54 (TQTETVLLVRKKGTVKDVQ) are Extracellular-facing. Residues 55 to 75 (ALWVLAMAAASAAGYHLLQLL) form a helical membrane-spanning segment. At 76-97 (KCLYLGRGGGRALAWTCLLLDK) the chain is on the cytoplasmic side. A helical transmembrane segment spans residues 98-118 (ACAYATFATTVAAAQACVVAL). Topologically, residues 119 to 139 (DGAHALQWTKLCNIYTRFCEQ) are extracellular. Residues 140–160 (VAGSLVLGMLAAVGTAVLSAA) form a helical membrane-spanning segment. The Cytoplasmic portion of the chain corresponds to 161-187 (SARNVFRHYYCSSHSPPAPPPETCDAH).

The protein belongs to the Casparian strip membrane proteins (CASP) family. In terms of assembly, homodimer and heterodimers.

It localises to the cell membrane. The protein is CASP-like protein 2C1 of Zea mays (Maize).